The following is a 277-amino-acid chain: Small ribosomal subunit protein uS2 (277 aa).

A disordered region spans residues 1-78 (MSENDEGTDA…PADEEPVLDE (78 aa)).

It belongs to the universal ribosomal protein uS2 family.

In Natronomonas pharaonis (strain ATCC 35678 / DSM 2160 / CIP 103997 / JCM 8858 / NBRC 14720 / NCIMB 2260 / Gabara) (Halobacterium pharaonis), this protein is Small ribosomal subunit protein uS2.